Reading from the N-terminus, the 565-residue chain is NAD-dependent malic enzyme (565 aa).

The Proton donor role is filled by Tyr104. Residue Arg157 coordinates NAD(+). The Proton acceptor role is filled by Lys175. A divalent metal cation is bound by residues Glu246, Asp247, and Asp270. Residues Asp270 and Asn418 each coordinate NAD(+).

It belongs to the malic enzymes family. In terms of assembly, homotetramer. The cofactor is Mg(2+). Mn(2+) serves as cofactor.

The enzyme catalyses (S)-malate + NAD(+) = pyruvate + CO2 + NADH. It catalyses the reaction oxaloacetate + H(+) = pyruvate + CO2. The chain is NAD-dependent malic enzyme from Erwinia tasmaniensis (strain DSM 17950 / CFBP 7177 / CIP 109463 / NCPPB 4357 / Et1/99).